We begin with the raw amino-acid sequence, 315 residues long: Putative ankyrin repeat protein R600 (315 aa).

ANK repeat units follow at residues 79–108 (NECRYFRMAVYNNSYDIAKYLLENGANVHV), 118–152 (SGFGKFYVFHSEKKEKRDTVELVKLLIDYNAMVGT), 153–182 (DTCNLVHTAIDANRLDVVKILVENGADIFS), 184–211 (QSKLLKSAVMYNYDILEYLISQGIDVTD), and 212–240 (DNNSVLKFAVSRGYDCVDLLLDAGADMNT).

The polypeptide is Putative ankyrin repeat protein R600 (Acanthamoeba polyphaga mimivirus (APMV)).